Here is a 305-residue protein sequence, read N- to C-terminus: Homoserine O-acetyltransferase (305 aa).

Catalysis depends on C142, which acts as the Acyl-thioester intermediate. The substrate site is built by K163 and S192. Catalysis depends on H235, which acts as the Proton acceptor. E237 is a catalytic residue. R249 contributes to the substrate binding site.

Belongs to the MetA family.

Its subcellular location is the cytoplasm. It carries out the reaction L-homoserine + acetyl-CoA = O-acetyl-L-homoserine + CoA. The protein operates within amino-acid biosynthesis; L-methionine biosynthesis via de novo pathway; O-acetyl-L-homoserine from L-homoserine: step 1/1. In terms of biological role, transfers an acetyl group from acetyl-CoA to L-homoserine, forming acetyl-L-homoserine. The sequence is that of Homoserine O-acetyltransferase from Hyphomonas neptunium (strain ATCC 15444).